The sequence spans 345 residues: Phosphoribosylformylglycinamidine cyclo-ligase (345 aa).

This sequence belongs to the AIR synthase family.

The protein resides in the cytoplasm. The catalysed reaction is 2-formamido-N(1)-(5-O-phospho-beta-D-ribosyl)acetamidine + ATP = 5-amino-1-(5-phospho-beta-D-ribosyl)imidazole + ADP + phosphate + H(+). Its pathway is purine metabolism; IMP biosynthesis via de novo pathway; 5-amino-1-(5-phospho-D-ribosyl)imidazole from N(2)-formyl-N(1)-(5-phospho-D-ribosyl)glycinamide: step 2/2. This chain is Phosphoribosylformylglycinamidine cyclo-ligase, found in Pseudoalteromonas atlantica (strain T6c / ATCC BAA-1087).